A 466-amino-acid polypeptide reads, in one-letter code: Argininosuccinate lyase (466 aa).

The protein belongs to the lyase 1 family. Argininosuccinate lyase subfamily.

It localises to the cytoplasm. It catalyses the reaction 2-(N(omega)-L-arginino)succinate = fumarate + L-arginine. The protein operates within amino-acid biosynthesis; L-arginine biosynthesis; L-arginine from L-ornithine and carbamoyl phosphate: step 3/3. The sequence is that of Argininosuccinate lyase from Brucella abortus (strain S19).